Reading from the N-terminus, the 274-residue chain is Sulfur carrier protein FdhD (274 aa).

Cys-121 functions as the Cysteine persulfide intermediate in the catalytic mechanism. 258-263 (FSKPGR) is a binding site for Mo-bis(molybdopterin guanine dinucleotide).

It belongs to the FdhD family.

It localises to the cytoplasm. Functionally, required for formate dehydrogenase (FDH) activity. Acts as a sulfur carrier protein that transfers sulfur from IscS to the molybdenum cofactor prior to its insertion into FDH. This is Sulfur carrier protein FdhD from Yersinia pseudotuberculosis serotype O:3 (strain YPIII).